We begin with the raw amino-acid sequence, 870 residues long: Leucine--tRNA ligase (870 aa).

The short motif at 43 to 53 (PYPSGRIHMGH) is the 'HIGH' region element. Residues 630 to 634 (KMSKS) carry the 'KMSKS' region motif. Lys633 contributes to the ATP binding site.

The protein belongs to the class-I aminoacyl-tRNA synthetase family.

Its subcellular location is the cytoplasm. The enzyme catalyses tRNA(Leu) + L-leucine + ATP = L-leucyl-tRNA(Leu) + AMP + diphosphate. This chain is Leucine--tRNA ligase, found in Parvibaculum lavamentivorans (strain DS-1 / DSM 13023 / NCIMB 13966).